The primary structure comprises 716 residues: Inhibitor of nuclear factor kappa-B kinase subunit epsilon (716 aa).

In terms of domain architecture, Protein kinase spans 9–315; that stretch reads WHTDDLLGQG…LQRVVVHVFS (307 aa). Position 15–23 (15–23) interacts with ATP; sequence LGQGATASV. A Glycyl lysine isopeptide (Lys-Gly) (interchain with G-Cter in ubiquitin) cross-link involves residue lysine 30. Lysine 38 lines the ATP pocket. The active-site Proton acceptor is aspartate 135. Serine 172 carries the post-translational modification Phosphoserine; by autocatalysis and IKKB. Residue lysine 231 forms a Glycyl lysine isopeptide (Lys-Gly) (interchain with G-Cter in SUMO1) linkage. The interaction with DDX3X stretch occupies residues 383–647; sequence STAIPKGLAF…VQESLSKLLE (265 aa). A Glycyl lysine isopeptide (Lys-Gly) (interchain with G-Cter in ubiquitin) cross-link involves residue lysine 401. The segment at 436-457 is leucine-zipper; it reads QELMFRGLHWVMEVLQATCRRT. Position 501 is a phosphothreonine (threonine 501). Position 664 is a phosphoserine (serine 664).

It belongs to the protein kinase superfamily. Ser/Thr protein kinase family. I-kappa-B kinase subfamily. As to quaternary structure, homodimer. Interacts with MAVS/IPS1. Interacts (via protein kinase domain) with TTLL12 (via N-terminus); the interaction prevents MAVS binding to IKBKE. Interacts with the adapter proteins AZI2/NAP1, TANK and TBKBP1/SINTBAD. Interacts with SIKE1. Interacts with TICAM1/TRIF, IRF3 and RIGI; interactions are disrupted by the interaction between IKBKE and SIKE1. Interacts with TOPORS; induced by DNA damage. Interacts with CYLD. Interacts (when polyubiquitinated) with IKBKB, IKBKG and MYD88. Interacts with IFIH1. Interacts with DDX3X; the interaction may be induced upon virus infection. Interacts with TRIM6 (via SPRY box). Interacts with unanchored K48-linked polyubiquitin chains; this leads to IKBKE activation. Interacts with TBK1. Interacts with FKBP5. (Microbial infection) Interacts (via Protein kinase domain) with arenavirus protein N; the interaction inhibits IKBKE kinase function. In terms of assembly, (Microbial infection) Interacts with Ebola virus protein VP35; the interaction leads to inhibition of cellular antiviral response by blocking necessary interactions between the IKBKE and MAVS/IPS as well as its substrates IRF3 and IRF7. As to quaternary structure, (Microbial infection) Interacts with Severe fever with thrombocytopenia virus (SFTSV) NSs; this interaction this interaction sequesters IKBKE in NSs-induced cytoplasmic inclusion bodies thereby inhibiting the IFN responses. (Microbial infection) Interacts with human T-cell leukemia virus 1/HTLV-1 protein HBZ. In terms of assembly, (Microbial infection) Interacts with Epstein-Barr virus (EBV) protein NEC2/BFRF1; this interaction inhibits IKBKE kinase activity and IRF3 nuclear translocation. Post-translationally, autophosphorylated and phosphorylated by IKBKB/IKKB. Phosphorylation at Ser-172 is enhanced by the interaction with DDX3X. Phosphorylated at Thr-501 upon IFN activation. In terms of processing, sumoylation by TOPORS upon DNA damage is required for protection of cells against DNA damage-induced cell death. Desumoylated by SENP1. 'Lys-63'-linked polyubiquitinated at Lys-30 and Lys-401 by TRAF2:BIRC2 and TRAF2:BIRC3 complexes. Ubiquitination is induced by LPS, TNFA and interleukin-1 and required for full kinase activity and KF-kappa-B pathway activation. In terms of tissue distribution, highly expressed in spleen followed by thymus, peripheral blood leukocytes, pancreas, placenta. Weakly expressed in lung, kidney, prostate, ovary and colon.

It is found in the cytoplasm. The protein resides in the nucleus. The protein localises to the PML body. The enzyme catalyses L-seryl-[I-kappa-B protein] + ATP = O-phospho-L-seryl-[I-kappa-B protein] + ADP + H(+). In terms of biological role, serine/threonine kinase that plays an essential role in regulating inflammatory responses to viral infection, through the activation of the type I IFN, NF-kappa-B and STAT signaling. Also involved in TNFA and inflammatory cytokines, like Interleukin-1, signaling. Following activation of viral RNA sensors, such as RIG-I-like receptors, associates with DDX3X and phosphorylates interferon regulatory factors (IRFs), IRF3 and IRF7, as well as DDX3X. This activity allows subsequent homodimerization and nuclear translocation of the IRF3 leading to transcriptional activation of pro-inflammatory and antiviral genes including IFNB. In order to establish such an antiviral state, IKBKE forms several different complexes whose composition depends on the type of cell and cellular stimuli. Thus, several scaffolding molecules including IPS1/MAVS, TANK, AZI2/NAP1 or TBKBP1/SINTBAD can be recruited to the IKBKE-containing-complexes. Activated by polyubiquitination in response to TNFA and interleukin-1, regulates the NF-kappa-B signaling pathway through, at least, the phosphorylation of CYLD. Phosphorylates inhibitors of NF-kappa-B thus leading to the dissociation of the inhibitor/NF-kappa-B complex and ultimately the degradation of the inhibitor. In addition, is also required for the induction of a subset of ISGs which displays antiviral activity, may be through the phosphorylation of STAT1 at 'Ser-708'. Phosphorylation of STAT1 at 'Ser-708' also seems to promote the assembly and DNA binding of ISGF3 (STAT1:STAT2:IRF9) complexes compared to GAF (STAT1:STAT1) complexes, in this way regulating the balance between type I and type II IFN responses. Protects cells against DNA damage-induced cell death. Also plays an important role in energy balance regulation by sustaining a state of chronic, low-grade inflammation in obesity, wich leads to a negative impact on insulin sensitivity. Phosphorylates AKT1. This is Inhibitor of nuclear factor kappa-B kinase subunit epsilon (IKBKE) from Homo sapiens (Human).